Consider the following 110-residue polypeptide: Replication initiation control protein YabA (110 aa).

Zn(2+)-binding residues include H84, C86, C100, and C103.

The protein belongs to the YabA family. Homotetramer. Interacts with both DnaA and DnaN, acting as a bridge between these two proteins. It depends on Zn(2+) as a cofactor.

Its subcellular location is the cytoplasm. It is found in the nucleoid. Involved in control of chromosome replication initiation. Inhibits the cooperative binding of DnaA to the oriC region, thus negatively regulating initiation of chromosome replication. Inhibits the ability of DnaA-ATP to form a helix on DNA; does not disassemble preformed DnaA-DNA helices. Decreases the residence time of DnaA on the chromosome at its binding sites (oriC, replication forks and promoter-binding sites). Tethers DnaA to the replication machinery via the DNA polymerase beta sliding clamp subunit (dnaN). Associates with oriC and other DnaA targets on the chromosome in a DnaA-dependent manner. This chain is Replication initiation control protein YabA, found in Streptococcus mutans serotype c (strain ATCC 700610 / UA159).